A 209-amino-acid chain; its full sequence is Pyridoxine/pyridoxamine 5'-phosphate oxidase (209 aa).

Residues 2-5 (RVEY) and Lys-66 each bind substrate. Residues 61 to 66 (RTVLCK), 76 to 77 (FT), Lys-83, and Gln-105 each bind FMN. Residues Tyr-123, Arg-127, and Ser-131 each contribute to the substrate site. FMN contacts are provided by residues 140 to 141 (QS) and Trp-186. 192 to 194 (RVH) is a binding site for substrate. Arg-196 is a binding site for FMN.

Belongs to the pyridoxamine 5'-phosphate oxidase family. Homodimer. Requires FMN as cofactor.

The enzyme catalyses pyridoxamine 5'-phosphate + O2 + H2O = pyridoxal 5'-phosphate + H2O2 + NH4(+). The catalysed reaction is pyridoxine 5'-phosphate + O2 = pyridoxal 5'-phosphate + H2O2. Its pathway is cofactor metabolism; pyridoxal 5'-phosphate salvage; pyridoxal 5'-phosphate from pyridoxamine 5'-phosphate: step 1/1. The protein operates within cofactor metabolism; pyridoxal 5'-phosphate salvage; pyridoxal 5'-phosphate from pyridoxine 5'-phosphate: step 1/1. In terms of biological role, catalyzes the oxidation of either pyridoxine 5'-phosphate (PNP) or pyridoxamine 5'-phosphate (PMP) into pyridoxal 5'-phosphate (PLP). The sequence is that of Pyridoxine/pyridoxamine 5'-phosphate oxidase from Mycobacterium sp. (strain JLS).